Consider the following 245-residue polypeptide: 8-amino-3,8-dideoxy-manno-octulosonate cytidylyltransferase (245 aa).

Belongs to the KdsB family.

It is found in the cytoplasm. It carries out the reaction 8-amino-3,8-dideoxy-alpha-D-manno-octulosonate + CTP = CMP-8-amino-3,8-dideoxy-alpha-D-manno-oct-2-ulosonate + diphosphate. The protein operates within bacterial outer membrane biogenesis; lipopolysaccharide biosynthesis. Activates KDO8N (a required 8-carbon sugar) for incorporation into bacterial lipopolysaccharide in the Shewanella genus. In Shewanella sp. (strain MR-7), this protein is 8-amino-3,8-dideoxy-manno-octulosonate cytidylyltransferase.